We begin with the raw amino-acid sequence, 479 residues long: UDP-glycosyltransferase 84A3 (479 aa).

His-19 functions as the Proton acceptor in the catalytic mechanism. Residue His-19 coordinates an anthocyanidin. Residues Gln-346, His-361, Trp-364, Asn-365, Ser-366, and Glu-369 each contribute to the UDP-alpha-D-glucose site. Residue Gly-384 participates in an anthocyanidin binding. UDP-alpha-D-glucose is bound by residues Asp-385 and Gln-386.

This sequence belongs to the UDP-glycosyltransferase family.

It carries out the reaction (E)-4-coumarate + UDP-alpha-D-glucose = 4-O-(beta-D-glucosyl)-trans-4-coumarate + UDP + H(+). The catalysed reaction is (E)-ferulate + UDP-alpha-D-glucose = 1-O-[(E)-feruloyl]-beta-D-glucose + UDP. The enzyme catalyses (E)-caffeate + UDP-alpha-D-glucose = 1-O-[(E)-caffeoyl]-beta-D-glucose + UDP. It catalyses the reaction (E)-sinapate + UDP-alpha-D-glucose = 1-O-(trans-sinapoyl)-beta-D-glucose + UDP. It carries out the reaction (E)-cinnamate + UDP-alpha-D-glucose = 1-O-(trans-cinnamoyl)-beta-D-glucose + UDP. UDP-glucosyltransferase that forms glucose esters with phenylpropanoids. Glucosylates 4-coumarate, ferulate, caffeate, sinapate and cinnamate. This Arabidopsis thaliana (Mouse-ear cress) protein is UDP-glycosyltransferase 84A3.